The sequence spans 21 residues: S-layer protein 2 (21 aa).

The protein resides in the secreted. The protein localises to the cell wall. It localises to the S-layer. Functionally, the S-layer is a paracrystalline mono-layered assembly of proteins which coat the surface of bacteria. In Bacillus thuringiensis subsp. konkukian, this protein is S-layer protein 2.